A 204-amino-acid polypeptide reads, in one-letter code: Prephenate decarboxylase (204 aa).

It belongs to the prephenate decarboxylase family.

The protein resides in the cytoplasm. It carries out the reaction prephenate + H(+) = 3-[(4R)-4-hydroxycyclohexa-1,5-dien-1-yl]-2-oxopropanoate + CO2. Its pathway is antibiotic biosynthesis; bacilysin biosynthesis. In terms of biological role, part of the bacABCDEF operon responsible for the biosynthesis of the nonribosomally synthesized dipeptide antibiotic bacilysin, composed of L-alanine and L-anticapsin. Bacilysin is an irreversible inactivator of the glutaminase domain of glucosamine synthetase. BacA is an unusual prephenate decarboxylase that avoids the typical aromatization of the cyclohexadienol ring of prephenate. BacA catalyzes the protonation of prephenate (1-carboxy-4-hydroxy-alpha-oxo-2,5-cyclohexadiene-1-propanoic acid) at C6 position, followed by a decarboxylation to produce the endocyclic-delta(4),delta(8)-7R-dihydro-hydroxyphenylpyruvate (en-H2HPP). En-H2HPP is able to undergo a slow nonenzymatic isomerization to produce the exocyclic-delta(3),delta(5)-dihydro-hydroxyphenylpyruvate (ex-H2HPP). BacA isomerizes only the pro-R double bond in prephenate. This is Prephenate decarboxylase from Bacillus amyloliquefaciens (Bacillus velezensis).